Consider the following 236-residue polypeptide: Rho-related GTP-binding protein RhoV (236 aa).

The interval 1 to 28 is disordered; sequence MPPRELSEAEPPPLPASTPPPRRRSAPP. Pro residues predominate over residues 10–20; that stretch reads EPPPLPASTPP. Phosphoserine is present on serine 25. GTP-binding positions include 38–45, 85–89, and 143–146; these read GDGAVGKS, DTAGQ, and TQAD. A lipid anchor (S-palmitoyl cysteine) is attached at cysteine 234.

It belongs to the small GTPase superfamily. Rho family. Interacts with PAK2. Mg(2+) is required as a cofactor. In terms of tissue distribution, highly expressed in brain and testis and at lower levels in spleen and lung.

It is found in the cell membrane. The protein resides in the endosome membrane. In terms of biological role, plays a role in the control of the actin cytoskeleton via activation of the JNK pathway. The polypeptide is Rho-related GTP-binding protein RhoV (Rattus norvegicus (Rat)).